The chain runs to 56 residues: Large ribosomal subunit protein bL32 (56 aa).

The interval 1-38 (MAVQQNKKSRSKRGMRRSHDSLSTAQLSVDATSGELHR) is disordered. Residues 7–16 (KKSRSKRGMR) show a composition bias toward basic residues. Positions 21–31 (SLSTAQLSVDA) are enriched in polar residues.

The protein belongs to the bacterial ribosomal protein bL32 family.

The sequence is that of Large ribosomal subunit protein bL32 from Shewanella woodyi (strain ATCC 51908 / MS32).